A 156-amino-acid chain; its full sequence is ATP synthase subunit b 2 (156 aa).

The chain crosses the membrane as a helical span at residues serine 6–tryptophan 26.

Belongs to the ATPase B chain family. In terms of assembly, F-type ATPases have 2 components, F(1) - the catalytic core - and F(0) - the membrane proton channel. F(1) has five subunits: alpha(3), beta(3), gamma(1), delta(1), epsilon(1). F(0) has three main subunits: a(1), b(2) and c(10-14). The alpha and beta chains form an alternating ring which encloses part of the gamma chain. F(1) is attached to F(0) by a central stalk formed by the gamma and epsilon chains, while a peripheral stalk is formed by the delta and b chains.

The protein localises to the cell inner membrane. F(1)F(0) ATP synthase produces ATP from ADP in the presence of a proton or sodium gradient. F-type ATPases consist of two structural domains, F(1) containing the extramembraneous catalytic core and F(0) containing the membrane proton channel, linked together by a central stalk and a peripheral stalk. During catalysis, ATP synthesis in the catalytic domain of F(1) is coupled via a rotary mechanism of the central stalk subunits to proton translocation. Its function is as follows. Component of the F(0) channel, it forms part of the peripheral stalk, linking F(1) to F(0). The chain is ATP synthase subunit b 2 from Vibrio campbellii (strain ATCC BAA-1116).